We begin with the raw amino-acid sequence, 169 residues long: Alpha-S2-casein-like B (169 aa).

The N-terminal stretch at 1–15 is a signal peptide; the sequence is MKFIILTCLLAVALA.

It belongs to the alpha-casein family. In terms of tissue distribution, mammary gland specific. Secreted in milk.

The protein localises to the secreted. Its function is as follows. Important role in the capacity of milk to transport calcium phosphate. The polypeptide is Alpha-S2-casein-like B (Csn1s2b) (Rattus norvegicus (Rat)).